A 559-amino-acid polypeptide reads, in one-letter code: Beta-glucuronidase (559 aa).

Positions 1-19 (MKRILGLIAYASVPTVINA) are cleaved as a signal peptide. N-linked (GlcNAc...) asparagine glycans are attached at residues Asn-53, Asn-91, Asn-99, and Asn-143. Glu-194 acts as the Proton donor in catalysis. Residues Asn-203, Asn-222, and Asn-280 are each glycosylated (N-linked (GlcNAc...) asparagine). The active-site Nucleophile is Glu-312. Asn-427, Asn-440, Asn-465, Asn-491, and Asn-520 each carry an N-linked (GlcNAc...) asparagine glycan.

This sequence belongs to the glycosyl hydrolase 79 family.

The protein resides in the secreted. The enzyme catalyses a beta-D-glucuronoside + H2O = D-glucuronate + an alcohol. Beta-glucuronidase that hydrolyzes beta-glucuronosyl and 4-O-methyl-beta-glucuronosyl residues of arabinogalactan-protein. Hydrolyzed heparan sulfate only very weakly. Has no activity on xylan from birchwood. Able to catalyze the transglycosylation of glucuronic acid (GlcA) residues from p-nitrophenyl-beta-glucuronic acid (PNP beta-GlcA) to various monosaccharide acceptors such as glucose, galactose and xylose. The sequence is that of Beta-glucuronidase from Neurospora crassa (strain ATCC 24698 / 74-OR23-1A / CBS 708.71 / DSM 1257 / FGSC 987).